Consider the following 218-residue polypeptide: MNQSSLLAEFGDPITRVENALIALKEGRGVLLLDDEDRENEGDIIYSVEHLTNEQMALMIRECSGIVCLCLTDAQADKLELPPMVVNNNSANQTAFTVSIEAKVGVTTGVSAADRVTTIKTAANPHAKPEDLARPGHVFPLRARPGGVMTRRGHTEGTIDLMQMAGLQPAGVLCEVTNPDGTMAKAPEIVAFGHLHNMPVLTIEDMVAYRNQFDLKLA.

D-ribulose 5-phosphate contacts are provided by residues R38–E39, D43, R151–T155, and E175. E39 provides a ligand contact to Mg(2+). Residues P125 to R151 form a disordered region. H154 contacts Mg(2+).

The protein belongs to the DHBP synthase family. In terms of assembly, homodimer. The cofactor is Mg(2+). Mn(2+) serves as cofactor.

It carries out the reaction D-ribulose 5-phosphate = (2S)-2-hydroxy-3-oxobutyl phosphate + formate + H(+). It participates in cofactor biosynthesis; riboflavin biosynthesis; 2-hydroxy-3-oxobutyl phosphate from D-ribulose 5-phosphate: step 1/1. Functionally, catalyzes the conversion of D-ribulose 5-phosphate to formate and 3,4-dihydroxy-2-butanone 4-phosphate. In Vibrio parahaemolyticus serotype O3:K6 (strain RIMD 2210633), this protein is 3,4-dihydroxy-2-butanone 4-phosphate synthase.